Reading from the N-terminus, the 452-residue chain is Phosphoglucosamine mutase (452 aa).

Catalysis depends on Ser104, which acts as the Phosphoserine intermediate. Mg(2+) is bound by residues Ser104, Asp241, Asp243, and Asp245. Ser104 carries the post-translational modification Phosphoserine.

It belongs to the phosphohexose mutase family. Mg(2+) is required as a cofactor. In terms of processing, activated by phosphorylation.

It carries out the reaction alpha-D-glucosamine 1-phosphate = D-glucosamine 6-phosphate. Catalyzes the conversion of glucosamine-6-phosphate to glucosamine-1-phosphate. In Arthrobacter sp. (strain FB24), this protein is Phosphoglucosamine mutase.